The sequence spans 1992 residues: E3 ubiquitin-protein ligase TRIP12 (1992 aa).

Polar residues predominate over residues 1–10; that stretch reads MSNRPNNNPG. Positions 1–398 are disordered; sequence MSNRPNNNPG…SGESESDDSE (398 aa). An N-acetylserine modification is found at S2. Phosphoserine is present on S12. A compositionally biased stretch (polar residues) spans 18–27; the sequence is RNTAGAQPQD. Residues 29-43 are compositionally biased toward low complexity; it reads SIGGRSCSSSSVVIV. Positions 48 to 70 are enriched in basic and acidic residues; the sequence is DPDRANTSEKQKTGQVPKKDNSR. Phosphoserine occurs at positions 77, 85, and 100. Positions 78–88 are enriched in polar residues; the sequence is PDYNRTNSPSS. A compositionally biased stretch (polar residues) spans 154–164; it reads SSCIKSASVSE. Composition is skewed to low complexity over residues 175–188 and 196–215; these read PTKL…SAKA and SSSA…ASSA. K181 is subject to N6-acetyllysine. The segment covering 280–290 has biased composition (polar residues); it reads PGSSKSETSKP. Residues S310 and S312 each carry the phosphoserine modification. Residues 330–339 show a composition bias toward low complexity; sequence GSCASASRRG. The span at 346 to 358 shows a compositional bias: basic and acidic residues; the sequence is GAAEARRQEKMAD. Residues 362-371 are compositionally biased toward polar residues; the sequence is NQETVNSSAA. The region spanning 749 to 836 is the WWE domain; that stretch reads MLKKGNAQNT…DPELAKSFIK (88 aa). The interval 938-1044 is disordered; sequence SLLTSPPKAC…QSPKSSFLAS (107 aa). S942 carries the phosphoserine modification. Residues 948 to 960 are compositionally biased toward polar residues; the sequence is TNGSGSLGSTPSV. Positions 961–973 are enriched in low complexity; it reads NSGTATAATNASA. Residues S991 and S997 each carry the phosphoserine modification. Basic residues predominate over residues 1001 to 1014; that stretch reads KRKRLPKRGSRRPK. The residue at position 1016 (S1016) is a Phosphoserine. The segment covering 1017–1026 has biased composition (basic and acidic residues); that stretch reads PPRDDDKVDN. Residues 1029-1040 show a composition bias toward low complexity; that stretch reads KSPTTTQSPKSS. A phosphoserine mark is found at S1030, S1317, S1322, S1329, and S1376. T1377 is subject to Phosphothreonine. 2 disordered regions span residues 1407-1434 and 1568-1587; these read SNKD…AKKH and TNPE…PRLD. K1425 carries the post-translational modification N6-acetyllysine. At S1427 the chain carries Phosphoserine. The interval 1496–1570 is K-box; that stretch reads EIIPTSEFIN…AMQRLLDTNP (75 aa). One can recognise an HECT domain in the interval 1885-1992; it reads PDHGYTHDSR…REGQQSFHLS (108 aa). Residue C1959 is the Glycyl thioester intermediate of the active site.

This sequence belongs to the UPL family. K-HECT subfamily. Interacts with MYC; leading to disrupt interaction with isoform p19ARF/ARF of CDKN2A. Interacts with TRADD; leading to disrupt interaction with isoform p19ARF/ARF of CDKN2A. Interacts with SMARCC1; leading to disrupt interaction with SMARCE1.

Its subcellular location is the nucleus. It is found in the nucleoplasm. The catalysed reaction is S-ubiquitinyl-[E2 ubiquitin-conjugating enzyme]-L-cysteine + [acceptor protein]-L-lysine = [E2 ubiquitin-conjugating enzyme]-L-cysteine + N(6)-ubiquitinyl-[acceptor protein]-L-lysine.. It participates in protein modification; protein ubiquitination. Functionally, E3 ubiquitin-protein ligase involved in ubiquitin fusion degradation (UFD) pathway and regulation of DNA repair. Part of the ubiquitin fusion degradation (UFD) pathway, a process that mediates ubiquitination of protein at their N-terminus, regardless of the presence of lysine residues in target proteins. Acts as a key regulator of DNA damage response by acting as a suppressor of RNF168, an E3 ubiquitin-protein ligase that promotes accumulation of 'Lys-63'-linked histone H2A and H2AX at DNA damage sites, thereby acting as a guard against excessive spreading of ubiquitinated chromatin at damaged chromosomes. In normal cells, mediates ubiquitination and degradation of isoform p19ARF/ARF of CDKN2A, a lysine-less tumor suppressor required for p53/TP53 activation under oncogenic stress. In cancer cells, however, isoform p19ARF/ARF and TRIP12 are located in different cell compartments, preventing isoform p19ARF/ARF ubiquitination and degradation. Does not mediate ubiquitination of isoform p16-INK4a of CDKN2A. Also catalyzes ubiquitination of NAE1 and SMARCE1, leading to their degradation. Ubiquitination and degradation of target proteins is regulated by interaction with proteins such as MYC, TRADD or SMARCC1, which disrupt the interaction between TRIP12 and target proteins. Mediates ubiquitination of ASXL1: following binding to N(6)-methyladenosine methylated DNA, ASXL1 is ubiquitinated by TRIP12, leading to its degradation and subsequent inactivation of the PR-DUB complex. This Bos taurus (Bovine) protein is E3 ubiquitin-protein ligase TRIP12 (TRIP12).